The following is a 104-amino-acid chain: Phosphoribosyl-ATP pyrophosphatase (104 aa).

Belongs to the PRA-PH family.

The protein localises to the cytoplasm. The catalysed reaction is 1-(5-phospho-beta-D-ribosyl)-ATP + H2O = 1-(5-phospho-beta-D-ribosyl)-5'-AMP + diphosphate + H(+). Its pathway is amino-acid biosynthesis; L-histidine biosynthesis; L-histidine from 5-phospho-alpha-D-ribose 1-diphosphate: step 2/9. The chain is Phosphoribosyl-ATP pyrophosphatase from Methanoregula boonei (strain DSM 21154 / JCM 14090 / 6A8).